The chain runs to 252 residues: Imidazole glycerol phosphate synthase subunit HisF (252 aa).

Catalysis depends on residues aspartate 11 and aspartate 130.

This sequence belongs to the HisA/HisF family. Heterodimer of HisH and HisF.

Its subcellular location is the cytoplasm. The enzyme catalyses 5-[(5-phospho-1-deoxy-D-ribulos-1-ylimino)methylamino]-1-(5-phospho-beta-D-ribosyl)imidazole-4-carboxamide + L-glutamine = D-erythro-1-(imidazol-4-yl)glycerol 3-phosphate + 5-amino-1-(5-phospho-beta-D-ribosyl)imidazole-4-carboxamide + L-glutamate + H(+). It functions in the pathway amino-acid biosynthesis; L-histidine biosynthesis; L-histidine from 5-phospho-alpha-D-ribose 1-diphosphate: step 5/9. In terms of biological role, IGPS catalyzes the conversion of PRFAR and glutamine to IGP, AICAR and glutamate. The HisF subunit catalyzes the cyclization activity that produces IGP and AICAR from PRFAR using the ammonia provided by the HisH subunit. The polypeptide is Imidazole glycerol phosphate synthase subunit HisF (Desulforamulus reducens (strain ATCC BAA-1160 / DSM 100696 / MI-1) (Desulfotomaculum reducens)).